The chain runs to 172 residues: Adenine phosphoribosyltransferase (172 aa).

The protein belongs to the purine/pyrimidine phosphoribosyltransferase family. In terms of assembly, homodimer.

It is found in the cytoplasm. The enzyme catalyses AMP + diphosphate = 5-phospho-alpha-D-ribose 1-diphosphate + adenine. The protein operates within purine metabolism; AMP biosynthesis via salvage pathway; AMP from adenine: step 1/1. Functionally, catalyzes a salvage reaction resulting in the formation of AMP, that is energically less costly than de novo synthesis. This chain is Adenine phosphoribosyltransferase, found in Trichormus variabilis (strain ATCC 29413 / PCC 7937) (Anabaena variabilis).